Consider the following 423-residue polypeptide: Histidine--tRNA ligase (423 aa).

Belongs to the class-II aminoacyl-tRNA synthetase family. As to quaternary structure, homodimer.

Its subcellular location is the cytoplasm. The catalysed reaction is tRNA(His) + L-histidine + ATP = L-histidyl-tRNA(His) + AMP + diphosphate + H(+). This is Histidine--tRNA ligase from Shewanella loihica (strain ATCC BAA-1088 / PV-4).